Here is a 443-residue protein sequence, read N- to C-terminus: Ribulose bisphosphate carboxylase large chain (443 aa).

Lys7 is modified (N6,N6,N6-trimethyllysine). Asn116 and Thr166 together coordinate substrate. Catalysis depends on Lys168, which acts as the Proton acceptor. Lys170 contributes to the substrate binding site. The Mg(2+) site is built by Lys194, Asp196, and Glu197. Position 194 is an N6-carboxylysine (Lys194). Catalysis depends on His287, which acts as the Proton acceptor. Substrate-binding residues include Arg288, His320, and Ser372.

This sequence belongs to the RuBisCO large chain family. Type I subfamily. Heterohexadecamer of 8 large chains and 8 small chains; disulfide-linked. The disulfide link is formed within the large subunit homodimers. It depends on Mg(2+) as a cofactor. In terms of processing, the disulfide bond which can form in the large chain dimeric partners within the hexadecamer appears to be associated with oxidative stress and protein turnover.

Its subcellular location is the plastid. The protein resides in the chloroplast. It catalyses the reaction 2 (2R)-3-phosphoglycerate + 2 H(+) = D-ribulose 1,5-bisphosphate + CO2 + H2O. The enzyme catalyses D-ribulose 1,5-bisphosphate + O2 = 2-phosphoglycolate + (2R)-3-phosphoglycerate + 2 H(+). Functionally, ruBisCO catalyzes two reactions: the carboxylation of D-ribulose 1,5-bisphosphate, the primary event in carbon dioxide fixation, as well as the oxidative fragmentation of the pentose substrate in the photorespiration process. Both reactions occur simultaneously and in competition at the same active site. In Abies sachalinensis (Sakhalin fir), this protein is Ribulose bisphosphate carboxylase large chain.